The sequence spans 464 residues: Heterogeneous nuclear ribonucleoprotein K (464 aa).

The residue at position 1 (Met-1) is an N-acetylmethionine. Residues 1-37 form a disordered region; the sequence is METEQPEETFPNTETNGEFGKRPAEDMEEEQAFKRSR. Positions 1-276 are necessary for interaction with DDX1; that stretch reads METEQPEETF…GRGGRPMPPS (276 aa). The span at 19-37 shows a compositional bias: basic and acidic residues; that stretch reads FGKRPAEDMEEEQAFKRSR. The residue at position 34 (Lys-34) is an N6-acetyllysine; alternate. A Glycyl lysine isopeptide (Lys-Gly) (interchain with G-Cter in SUMO1); alternate cross-link involves residue Lys-34. A Glycyl lysine isopeptide (Lys-Gly) (interchain with G-Cter in SUMO2); alternate cross-link involves residue Lys-34. A Phosphoserine modification is found at Ser-36. The residue at position 39 (Thr-39) is a Phosphothreonine. The 63-residue stretch at 42–104 folds into the KH 1 domain; that stretch reads MVELRILLQS…ETIGEILKKI (63 aa). Glycyl lysine isopeptide (Lys-Gly) (interchain with G-Cter in SUMO2) cross-links involve residues Lys-52 and Lys-60. 2 repeat units span residues 54–76 and 59–62. The 2 X 22 AA approximate repeats stretch occupies residues 54–421; that stretch reads AGAVIGKGGK…QIRHESGASI (368 aa). Residues 59–407 form a 5 X 4 AA repeats of G-X-G-G region; the sequence is GKGGKNIKAL…LAGSIIGKGG (349 aa). 2 positions are modified to phosphoserine: Ser-75 and Ser-116. The 66-residue stretch at 144-209 folds into the KH 2 domain; sequence DCELRLLIHQ…DRVVECIKII (66 aa). Residue Lys-163 forms a Glycyl lysine isopeptide (Lys-Gly) (interchain with G-Cter in SUMO1); alternate linkage. Residue Lys-163 forms a Glycyl lysine isopeptide (Lys-Gly) (interchain with G-Cter in SUMO2); alternate linkage. Lys-198 bears the N6-acetyllysine mark. A phosphoserine mark is found at Ser-214 and Ser-216. Lys-219 participates in a covalent cross-link: Glycyl lysine isopeptide (Lys-Gly) (interchain with G-Cter in SUMO2); alternate. An N6-succinyllysine; alternate modification is found at Lys-219. Residues 236-273 are RNA-binding RGG-box; sequence YGGFTMMFDDRRGRPVGFPMRGRGGFDRMPPGRGGRPM. 3 consecutive repeat copies span residues 245-250, 257-260, and 267-270. Residues 245-329 form a 2 X 6 AA approximate repeats region; sequence DRRGRPVGFP…LMAYDRRGRP (85 aa). The segment at 250–329 is disordered; the sequence is PVGFPMRGRG…LMAYDRRGRP (80 aa). Low complexity predominate over residues 252–266; it reads GFPMRGRGGFDRMPP. The span at 276-285 shows a compositional bias: basic and acidic residues; that stretch reads SRRDYDDMSP. Ser-284 carries the phosphoserine modification. One copy of the 3-4 repeat lies at 295-298; sequence GRGG. Arg-316 is modified (omega-N-methylarginine). Residues 324–329 form a 2-2 repeat; sequence DRRGRP. Arg-377 is subject to Omega-N-methylarginine. A Phosphoserine modification is found at Ser-379. Tyr-380 is modified (phosphotyrosine). The 65-residue stretch at 387–451 folds into the KH 3 domain; that stretch reads IITTQVTIPK…DQIQNAQYLL (65 aa). A run of 2 repeats spans residues 399–421 and 404–407. Lys-405 carries the N6-acetyllysine; alternate modification. Residue Lys-405 forms a Glycyl lysine isopeptide (Lys-Gly) (interchain with G-Cter in SUMO2); alternate linkage. Ser-420 is subject to Phosphoserine. A Glycyl lysine isopeptide (Lys-Gly) (interchain with G-Cter in SUMO1); alternate cross-link involves residue Lys-422. Residue Lys-422 forms a Glycyl lysine isopeptide (Lys-Gly) (interchain with G-Cter in SUMO2); alternate linkage. Residue Lys-422 forms a Glycyl lysine isopeptide (Lys-Gly) (interchain with G-Cter in SUMO); alternate linkage.

Identified in the spliceosome C complex. Interacts with ANKRD28, RBM42 and ZIK1. Interacts with DDX1. Interacts with MDM2; this interaction leads to ubiquitination and proteasomal degradation. Interacts with p53/TP53. Interacts with BRDT. Interacts with IVNS1ABP. Interacts with PPIA/CYPA. Part of a transcription inhibitory ribonucleoprotein complex composed at least of the circular RNA circZNF827, ZNF827 and HNRNPL. Sumoylated by CBX4. Sumoylation is increased upon DNA damage, such as that produced by doxorubicin, etoposide, UV light and camptothecin, due to enhanced CBX4 phosphorylation by HIPK2 under these conditions. Post-translationally, ubiquitinated by MDM2. Doxorubicin treatment does not affect monoubiquitination, but slightly decreases HNRNPK poly-ubiquitination. In terms of processing, O-glycosylated (O-GlcNAcylated), in a cell cycle-dependent manner.

Its subcellular location is the cytoplasm. It is found in the nucleus. It localises to the nucleoplasm. The protein resides in the cell projection. The protein localises to the podosome. Functionally, one of the major pre-mRNA-binding proteins. Binds tenaciously to poly(C) sequences. Likely to play a role in the nuclear metabolism of hnRNAs, particularly for pre-mRNAs that contain cytidine-rich sequences. Can also bind poly(C) single-stranded DNA. Plays an important role in p53/TP53 response to DNA damage, acting at the level of both transcription activation and repression. When sumoylated, acts as a transcriptional coactivator of p53/TP53, playing a role in p21/CDKN1A and 14-3-3 sigma/SFN induction. As far as transcription repression is concerned, acts by interacting with long intergenic RNA p21 (lincRNA-p21), a non-coding RNA induced by p53/TP53. This interaction is necessary for the induction of apoptosis, but not cell cycle arrest. As part of a ribonucleoprotein complex composed at least of ZNF827, HNRNPL and the circular RNA circZNF827 that nucleates the complex on chromatin, may negatively regulate the transcription of genes involved in neuronal differentiation. In Macaca fascicularis (Crab-eating macaque), this protein is Heterogeneous nuclear ribonucleoprotein K (HNRNPK).